The chain runs to 514 residues: Ribonuclease Y (514 aa).

The helical transmembrane segment at 2–22 (EDLIVAIVVGAFSSAISIFVV) threads the bilayer. A KH domain is found at 204-268 (LINNIPLNDE…VATKTIRELL (65 aa)). Residues 330 to 423 (ALAHTLEVAH…VCAADALSAA (94 aa)) form the HD domain.

It belongs to the RNase Y family.

It is found in the cell membrane. In terms of biological role, endoribonuclease that initiates mRNA decay. This is Ribonuclease Y from Aliarcobacter butzleri (strain RM4018) (Arcobacter butzleri).